The primary structure comprises 316 residues: Ribosomal RNA small subunit methyltransferase H (316 aa).

Residues A35–H37, D55, F84, D105, and Q112 each bind S-adenosyl-L-methionine.

Belongs to the methyltransferase superfamily. RsmH family.

The protein localises to the cytoplasm. It catalyses the reaction cytidine(1402) in 16S rRNA + S-adenosyl-L-methionine = N(4)-methylcytidine(1402) in 16S rRNA + S-adenosyl-L-homocysteine + H(+). Functionally, specifically methylates the N4 position of cytidine in position 1402 (C1402) of 16S rRNA. The sequence is that of Ribosomal RNA small subunit methyltransferase H from Streptococcus pneumoniae (strain P1031).